Reading from the N-terminus, the 99-residue chain is UPF0235 protein HS_1657 (99 aa).

The protein belongs to the UPF0235 family.

In Histophilus somni (strain 129Pt) (Haemophilus somnus), this protein is UPF0235 protein HS_1657.